Consider the following 193-residue polypeptide: MASSTLLITLLISLSAFFLRMVLAQVPATCASRLLSLAPCGPFVQGFAQLPAQPCCDSLNQIYSQEATCLCLFLNNTSTLSPAFPINQTLALQLPPLCNIPANSSTCSSSFPGEAPSDSSSVAPPPSSSTGSQISQGAKNNSRVAATPVAQMAPRPTSFMGLGYGLKSSGSKSEIQLTIFALAAILPAALLLI.

Positions Met1 to Ala24 are cleaved as a signal peptide. Disulfide bonds link Cys30–Cys71, Cys40–Cys55, Cys56–Cys98, and Cys69–Cys107. N-linked (GlcNAc...) asparagine glycans are attached at residues Asn76, Asn87, and Asn103. A disordered region spans residues Ser109–Asn140. Over residues Pro116–Ser132 the composition is skewed to low complexity. The N-linked (GlcNAc...) asparagine glycan is linked to Asn140. The GPI-anchor amidated serine moiety is linked to residue Ser168. The propeptide at Ser169–Ile193 is removed in mature form.

Belongs to the plant LTP family.

It localises to the cell membrane. Functionally, probable lipid transfer protein. The polypeptide is Non-specific lipid transfer protein GPI-anchored 10 (Arabidopsis thaliana (Mouse-ear cress)).